Here is a 343-residue protein sequence, read N- to C-terminus: MTTDTTGRAGNPAAAASPDRFRYGFLKGNPQLTKNGELKHLLSIEGLPRSIVNHILDTAEQFVSVTDREVKKVPLLRGKSVFNLFFENSTRTRTTFEIAATRLSADVLNLNINASSTSKGESLLDTINNLSAMHADLFVVRHASSGAPYLIAEHCAPHVHVINAGDGRHAHPTQGLLDMYTIRHYKRDFTKLRVAIVGDILHSRVARSDIHALTTLGVPEVRAIGPRTLLPGGLEQMGVKVFHNLDEGLKGVDVIIMLRLQNERMSGALLPSAQEYFKTWGLTPERLALAAPDAIVMHPGPMNRGVEIDSQVADGPQSVILNQVTFGIAVRMAVMGIVAGNSD.

2 residues coordinate carbamoyl phosphate: Arg91 and Thr92. Lys119 is an L-aspartate binding site. Residues Arg141, His171, and Gln174 each contribute to the carbamoyl phosphate site. L-aspartate-binding residues include Arg204 and Arg259. Gly300 and Pro301 together coordinate carbamoyl phosphate.

It belongs to the aspartate/ornithine carbamoyltransferase superfamily. ATCase family. As to quaternary structure, heterododecamer (2C3:3R2) of six catalytic PyrB chains organized as two trimers (C3), and six regulatory PyrI chains organized as three dimers (R2).

The catalysed reaction is carbamoyl phosphate + L-aspartate = N-carbamoyl-L-aspartate + phosphate + H(+). Its pathway is pyrimidine metabolism; UMP biosynthesis via de novo pathway; (S)-dihydroorotate from bicarbonate: step 2/3. Its function is as follows. Catalyzes the condensation of carbamoyl phosphate and aspartate to form carbamoyl aspartate and inorganic phosphate, the committed step in the de novo pyrimidine nucleotide biosynthesis pathway. The sequence is that of Aspartate carbamoyltransferase catalytic subunit from Burkholderia orbicola (strain MC0-3).